The chain runs to 391 residues: Probable tRNA sulfurtransferase (391 aa).

The 108-residue stretch at 60-167 (DEIIDHIKKV…KDNCYVYTDR (108 aa)) folds into the THUMP domain. Residues 185 to 186 (LL), 210 to 211 (HF), Arg267, Gly289, and Gln298 each bind ATP.

This sequence belongs to the ThiI family.

Its subcellular location is the cytoplasm. The catalysed reaction is [ThiI sulfur-carrier protein]-S-sulfanyl-L-cysteine + a uridine in tRNA + 2 reduced [2Fe-2S]-[ferredoxin] + ATP + H(+) = [ThiI sulfur-carrier protein]-L-cysteine + a 4-thiouridine in tRNA + 2 oxidized [2Fe-2S]-[ferredoxin] + AMP + diphosphate. The enzyme catalyses [ThiS sulfur-carrier protein]-C-terminal Gly-Gly-AMP + S-sulfanyl-L-cysteinyl-[cysteine desulfurase] + AH2 = [ThiS sulfur-carrier protein]-C-terminal-Gly-aminoethanethioate + L-cysteinyl-[cysteine desulfurase] + A + AMP + 2 H(+). Its pathway is cofactor biosynthesis; thiamine diphosphate biosynthesis. Functionally, catalyzes the ATP-dependent transfer of a sulfur to tRNA to produce 4-thiouridine in position 8 of tRNAs, which functions as a near-UV photosensor. Also catalyzes the transfer of sulfur to the sulfur carrier protein ThiS, forming ThiS-thiocarboxylate. This is a step in the synthesis of thiazole, in the thiamine biosynthesis pathway. The sulfur is donated as persulfide by IscS. The chain is Probable tRNA sulfurtransferase from Finegoldia magna (strain ATCC 29328 / DSM 20472 / WAL 2508) (Peptostreptococcus magnus).